A 593-amino-acid polypeptide reads, in one-letter code: Probable tripeptidyl-peptidase SED3 (593 aa).

The first 18 residues, 1 to 18 (MLLRWHSVIPLFLTMTVA), serve as a signal peptide directing secretion. Positions 19-198 (LPNTYRTVVE…SLQVIYSSTN (180 aa)) are cleaved as a propeptide — removed in mature form. N-linked (GlcNAc...) asparagine glycosylation is found at N198, N204, N261, and N275. The region spanning 206–592 (TITPRCLREL…RILAKIVQHM (387 aa)) is the Peptidase S53 domain. Active-site charge relay system residues include E282 and D286. The N-linked (GlcNAc...) asparagine glycan is linked to N295. S496 functions as the Charge relay system in the catalytic mechanism. Residues D538 and I539 each coordinate Ca(2+). N554 and N566 each carry an N-linked (GlcNAc...) asparagine glycan. Residues G570 and D572 each contribute to the Ca(2+) site.

The cofactor is Ca(2+).

The protein resides in the secreted. The protein localises to the extracellular space. The enzyme catalyses Release of an N-terminal tripeptide from a polypeptide.. Its function is as follows. Secreted tripeptidyl-peptidase which degrades proteins at acidic pHs and is involved in virulence. The polypeptide is Probable tripeptidyl-peptidase SED3 (SED3) (Trichophyton verrucosum (strain HKI 0517)).